Reading from the N-terminus, the 379-residue chain is Oxidoreductase chry3 (379 aa).

Disordered regions lie at residues 1–23 and 126–150; these read MTTA…QPTP and EGDD…TSHM. Residues 126–138 show a composition bias toward acidic residues; the sequence is EGDDSAPAEEEAD.

This sequence belongs to the asaB hydroxylase/desaturase family.

Its pathway is pigment biosynthesis. Oxidoreductase; part of the gene cluster that mediates the biosynthesis of the yellow pigment chrysogine. Pyruvic acid and anthranilic acid are likely substrates for the nonribosomal peptide synthetase chry1/NRPS14, with pyruvic acid adenylated by the first A domain and anthranilic acid by the second. If pyruvic acid and anthranilic acid are merged and released from chry1/NRPS14 by hydrolysis, a subsequent amidation would lead to 2-pyruvoylaminobenzamide. This process is probably catalyzed by the amidotransferase chry2 using glutamine as amino donor. The dehydrogenase chry5 that has a terminal berberine bridge domain for C-N cyclization could catalyze the cyclization of 2-pyruvoylaminobenzamide to yield acetyl-4(3H)-quinazolidinone. A final reduction of acetyl-4(3H)-quinazolidinone catalyzed by the oxidoreductase chry4 would result in chrysogine. The sequence is that of Oxidoreductase chry3 from Gibberella zeae (strain ATCC MYA-4620 / CBS 123657 / FGSC 9075 / NRRL 31084 / PH-1) (Wheat head blight fungus).